The primary structure comprises 159 residues: 2-C-methyl-D-erythritol 2,4-cyclodiphosphate synthase (159 aa).

Positions 11 and 13 each coordinate a divalent metal cation. Residues 11–13 (DVH) and 37–38 (HS) contribute to the 4-CDP-2-C-methyl-D-erythritol 2-phosphate site. H45 serves as a coordination point for a divalent metal cation. Residues 59-61 (DIG) and 64-68 (FPDSD) contribute to the 4-CDP-2-C-methyl-D-erythritol 2-phosphate site.

The protein belongs to the IspF family. As to quaternary structure, homotrimer. A divalent metal cation serves as cofactor.

The enzyme catalyses 4-CDP-2-C-methyl-D-erythritol 2-phosphate = 2-C-methyl-D-erythritol 2,4-cyclic diphosphate + CMP. Its pathway is isoprenoid biosynthesis; isopentenyl diphosphate biosynthesis via DXP pathway; isopentenyl diphosphate from 1-deoxy-D-xylulose 5-phosphate: step 4/6. Its function is as follows. Involved in the biosynthesis of isopentenyl diphosphate (IPP) and dimethylallyl diphosphate (DMAPP), two major building blocks of isoprenoid compounds. Catalyzes the conversion of 4-diphosphocytidyl-2-C-methyl-D-erythritol 2-phosphate (CDP-ME2P) to 2-C-methyl-D-erythritol 2,4-cyclodiphosphate (ME-CPP) with a corresponding release of cytidine 5-monophosphate (CMP). In Solibacter usitatus (strain Ellin6076), this protein is 2-C-methyl-D-erythritol 2,4-cyclodiphosphate synthase.